The following is a 434-amino-acid chain: D-amino acid dehydrogenase (434 aa).

Position 3 to 17 (V3 to W17) interacts with FAD.

This sequence belongs to the DadA oxidoreductase family. FAD is required as a cofactor.

It carries out the reaction a D-alpha-amino acid + A + H2O = a 2-oxocarboxylate + AH2 + NH4(+). Its pathway is amino-acid degradation; D-alanine degradation; NH(3) and pyruvate from D-alanine: step 1/1. Oxidative deamination of D-amino acids. The sequence is that of D-amino acid dehydrogenase from Yersinia pseudotuberculosis serotype O:3 (strain YPIII).